A 66-amino-acid chain; its full sequence is Large ribosomal subunit protein bL35 (66 aa).

2 stretches are compositionally biased toward basic residues: residues 1–16 and 38–49; these read MPKM…RVKR and TKQKRQLRKARL. The segment at 1–49 is disordered; that stretch reads MPKMKTHRGAAKRVKRTASGQLKRSRAFTSHLFANKSTKQKRQLRKARL.

Belongs to the bacterial ribosomal protein bL35 family.

The sequence is that of Large ribosomal subunit protein bL35 from Staphylococcus aureus (strain MSSA476).